A 132-amino-acid chain; its full sequence is uncharacterized protein (132 aa).

The helical transmembrane segment at V105–Y125 threads the bilayer.

It localises to the membrane. This is an uncharacterized protein from Methanocaldococcus jannaschii (strain ATCC 43067 / DSM 2661 / JAL-1 / JCM 10045 / NBRC 100440) (Methanococcus jannaschii).